We begin with the raw amino-acid sequence, 873 residues long: Leucine--tRNA ligase (873 aa).

The 'HIGH' region signature appears at 47-57; it reads PYPSGKLHMGH. The 'KMSKS' region signature appears at 636 to 640; that stretch reads KMSKS. Residue Lys-639 participates in ATP binding.

Belongs to the class-I aminoacyl-tRNA synthetase family.

It localises to the cytoplasm. It carries out the reaction tRNA(Leu) + L-leucine + ATP = L-leucyl-tRNA(Leu) + AMP + diphosphate. The chain is Leucine--tRNA ligase from Acinetobacter baylyi (strain ATCC 33305 / BD413 / ADP1).